Here is a 309-residue protein sequence, read N- to C-terminus: Dicarboxylate carrier SLC25A8 (309 aa).

The Mitochondrial intermembrane portion of the chain corresponds to 1–16; it reads MVGFKATDVPPTATVK. 3 Solcar repeats span residues 11–106, 114–203, and 212–297; these read PTAT…VKQF, ASIG…IKDA, and DDLP…LKRA. Residues 16 to 63 form an important for interaction with long-chain fatty acids region; it reads KFLGAGTAACIADLITFPLDTAKVRLQIQGESQGPVRATASAQYRGVM. The chain crosses the membrane as a helical span at residues 17–40; sequence FLGAGTAACIADLITFPLDTAKVR. Over 41 to 77 the chain is Mitochondrial matrix; sequence LQIQGESQGPVRATASAQYRGVMGTILTMVRTEGPRS. The chain crosses the membrane as a helical span at residues 78–103; that stretch reads LYNGLVAGLQRQMSFASVRIGLYDSV. At 104-119 the chain is on the mitochondrial intermembrane side; the sequence is KQFYTKGSEHASIGSR. A helical membrane pass occupies residues 120-145; it reads LLAGSTTGALAVAVAQPTDVVKVRFQ. The Mitochondrial matrix segment spans residues 146–173; it reads AQARAGGGRRYQSTVNAYKTIAREEGFR. The helical transmembrane segment at 174-199 threads the bilayer; sequence GLWKGTSPNVARNAIVNCAELVTYDL. Residues 200–217 are Mitochondrial intermembrane-facing; the sequence is IKDALLKANLMTDDLPCH. The chain crosses the membrane as a helical span at residues 218–242; it reads FTSAFGAGFCTTVIASPVDVVKTRY. Residues 243 to 268 lie on the Mitochondrial matrix side of the membrane; that stretch reads MNSALGQYSSAGHCALTMLQKEGPRA. The helical transmembrane segment at 269 to 294 threads the bilayer; that stretch reads FYKGFMPSFLRLGSWNVVMFVTYEQL. Positions 278–285 are important for interaction with long-chain fatty acids; sequence LRLGSWNV. Residues 295–309 lie on the Mitochondrial intermembrane side of the membrane; that stretch reads KRALMAACTSREAPF.

Belongs to the mitochondrial carrier (TC 2.A.29) family. As to quaternary structure, homotetramer. Adopts an asymmetrical dimer of dimers functional form. Widely expressed in adult human tissues, including tissues rich in macrophages. Most expressed in white adipose tissue and skeletal muscle.

It is found in the mitochondrion inner membrane. The enzyme catalyses L-aspartate(out) + phosphate(in) + H(+)(in) = L-aspartate(in) + phosphate(out) + H(+)(out). The catalysed reaction is oxaloacetate(out) + phosphate(in) + H(+)(in) = oxaloacetate(in) + phosphate(out) + H(+)(out). It catalyses the reaction (S)-malate(out) + phosphate(in) + H(+)(in) = (S)-malate(in) + phosphate(out) + H(+)(out). It carries out the reaction malonate(out) + phosphate(in) + H(+)(in) = malonate(in) + phosphate(out) + H(+)(out). The enzyme catalyses sulfate(out) + phosphate(in) + H(+)(in) = sulfate(in) + phosphate(out) + H(+)(out). The catalysed reaction is (S)-malate(out) = (S)-malate(in). It catalyses the reaction L-aspartate(out) = L-aspartate(in). It carries out the reaction phosphate(in) = phosphate(out). The enzyme catalyses chloride(in) = chloride(out). The catalysed reaction is H(+)(in) = H(+)(out). It catalyses the reaction a long-chain fatty acid(out) = a long-chain fatty acid(in). Its activity is regulated as follows. Inhibited by pyridoxal- 5'-phosphate, bathophenanthroline, tannic acid, bromocresol purple, butylmalonate and phenylsuccinate. Proton conductance is activated by cardiolipin and long-chain free fatty acids and inhibited by purine nucleotides ATP and ADP. Chloride ion transporter activity is inhibited by long-chain free fatty acids. In terms of biological role, antiporter that exports dicarboxylate intermediates of the Krebs cycle in exchange for phosphate plus a proton across the inner membrane of mitochondria, a process driven by mitochondrial motive force with an overall impact on glycolysis, glutaminolysis and glutathione-dependent redox balance. Continuous export of oxaloacetate and related four-carbon dicarboxylates from mitochondrial matrix into the cytosol negatively regulates the oxidation of acetyl-CoA substrates via the Krebs cycle, lowering the ATP/ADP ratio and reactive oxygen species (ROS) production. May mediate inducible proton entry into the mitochondrial matrix affecting ATP turnover as a protection mechanism against oxidative stress. The proton currents are most likely associated with fatty acid flipping across the inner membrane of mitochondria in a metabolic process regulated by free fatty acids and purine nucleotides. Regulates the use of glucose as a source of energy. Required for glucose-induced DRP1-dependent mitochondrial fission and neuron activation in the ventromedial nucleus of the hypothalamus (VMH). This mitochondrial adaptation mechanism modulates the VMH pool of glucose-excited neurons with an impact on systemic glucose homeostasis. Regulates ROS levels and metabolic reprogramming of macrophages during the resolution phase of inflammation. Attenuates ROS production in response to IL33 to preserve the integrity of the Krebs cycle required for persistent production of itaconate and subsequent GATA3-dependent differentiation of inflammation-resolving alternatively activated macrophages. Can unidirectionally transport anions including L-malate, L-aspartate, phosphate and chloride ions. Does not mediate adaptive thermogenesis. The polypeptide is Dicarboxylate carrier SLC25A8 (UCP2) (Homo sapiens (Human)).